The sequence spans 401 residues: MVSIEFDSSHIDRFIKIVYGTRNELIDSDSYLRKFIEFSGTDGCINIIKNKYELIYFRFVNEKWTFYGDKKFLPKKWQLKLFQPIFVNLDKNLAYLGAYFNGNLRIIYTEDIDGRISTMYPCDYCVVNFKNNTQTNIINGYYYQKPLEYKDILMITNKGIVYFNSSSCIDMIISLLKLNLVGIETSNVISVLPKNIMDIVIKDFDSCKSSLLLNKPNNLYSNIFNQIKSNDSDFYCKKITIFNNKIIEILALNCASNYQSVINFVDNLKNDFITELQQLYRWFRKHPVEKKLVFSTYDDHGYTVLLNKIHEKILSIEDKKIPNKFWIPQKKIIDMFNENIDVYSNIGFTMDLVSAIKYRSQFANIVYHIFTLSNKKTEKNNFYPFKIFSPYLFILEHILNQ.

This is an uncharacterized protein from Acanthamoeba polyphaga mimivirus (APMV).